Consider the following 155-residue polypeptide: Transcription antitermination protein NusB (155 aa).

Belongs to the NusB family.

Functionally, involved in transcription antitermination. Required for transcription of ribosomal RNA (rRNA) genes. Binds specifically to the boxA antiterminator sequence of the ribosomal RNA (rrn) operons. This is Transcription antitermination protein NusB from Ralstonia pickettii (strain 12J).